We begin with the raw amino-acid sequence, 333 residues long: Phospholipid phosphatase-related protein type 1 (333 aa).

3 helical membrane passes run 12-32 (IIPC…LLAY), 66-86 (FIQP…IIFV), and 126-146 (FIGV…AGQV). N-linked (GlcNAc...) asparagine glycosylation is present at Asn-162. A run of 3 helical transmembrane segments spans residues 200 to 217 (ASLS…ITST), 223 to 243 (SRLA…LTGL), and 256 to 276 (VVAG…CVVN).

The protein belongs to the PA-phosphatase related phosphoesterase family.

The protein resides in the cell membrane. It localises to the cell projection. It is found in the neuron projection. May play a role in neurite outgrowth and neurogenesis. In Danio rerio (Zebrafish), this protein is Phospholipid phosphatase-related protein type 1 (plppr1).